The following is a 23-amino-acid chain: Basic phospholipase A2 CB2 (23 aa).

It depends on Ca(2+) as a cofactor. Post-translationally, contains 7 disulfide bonds. In terms of tissue distribution, expressed by the venom gland.

The protein resides in the secreted. The catalysed reaction is a 1,2-diacyl-sn-glycero-3-phosphocholine + H2O = a 1-acyl-sn-glycero-3-phosphocholine + a fatty acid + H(+). Snake venom phospholipase A2 (PLA2) that shows presynaptic neurotoxicity. PLA2 catalyzes the calcium-dependent hydrolysis of the 2-acyl groups in 3-sn-phosphoglycerides. The protein is Basic phospholipase A2 CB2 of Crotalus durissus cumanensis (South American rattlesnake).